Consider the following 1011-residue polypeptide: RAS protein activator like-3 (1011 aa).

The interval 1-38 (MDPPSPSRTSQTQPTATSPLTSYRWHTGGGGEKAAGGF) is disordered. Low complexity predominate over residues 7–22 (SRTSQTQPTATSPLTS). Ser-18 and Ser-51 each carry phosphoserine. Disordered regions lie at residues 52-136 (HQEP…PVWD), 151-197 (GGEE…GPNQ), and 209-230 (KEKKKARLEPRDGPPSALGSRE). A compositionally biased stretch (basic residues) spans 81 to 95 (SRLRLSKALWGRHKN). Over residues 100–117 (PDPEPEQEAPELEPEPEL) the composition is skewed to acidic residues. Residues 118-131 (EPPTPQIPEAPTPN) are compositionally biased toward pro residues. 4 positions are modified to phosphoserine: Ser-164, Ser-166, Ser-167, and Ser-170. A compositionally biased stretch (basic and acidic residues) spans 179 to 190 (RDPDRMPGKTEP). Residues 197-293 (QVHNVRGLLK…WIEDLRRQFQ (97 aa)) form the PH domain. Residues Ser-224, Ser-228, and Ser-231 each carry the phosphoserine modification. Thr-234 is subject to Phosphothreonine. In terms of domain architecture, C2 spans 284 to 404 (WIEDLRRQFQ…APAAGLERWF (121 aa)). One can recognise a Ras-GAP domain in the interval 474–682 (GRAQALVTDL…PAMQCFLDQV (209 aa)). Disordered stretches follow at residues 756–885 (QVHS…LGTH) and 987–1011 (LSPRTRGSWSQPQPLKAPCLNGDTT). Phosphoserine is present on residues Ser-787 and Ser-790. Residues 792 to 808 (RRSESWARPRPDEERPL) are compositionally biased toward basic and acidic residues. 2 stretches are compositionally biased toward polar residues: residues 871-882 (QMDQPQDRNQAL) and 987-999 (LSPRTRGSWSQPQ). A coiled-coil region spans residues 888 to 988 (VNKLAELQCE…RDAVQSLQLS (101 aa)). Position 988 is a phosphoserine (Ser-988).

Predominantly expressed in cells of hematopoietic lineages.

It is found in the cytoplasm. It localises to the cell cortex. In terms of biological role, functions as a Ras GTPase-activating protein. Plays an important role in the expansion and functions of natural killer T (NKT) cells in the liver by negatively regulating RAS activity and the down-stream ERK signaling pathway. The polypeptide is RAS protein activator like-3 (RASAL3) (Homo sapiens (Human)).